Reading from the N-terminus, the 517-residue chain is zeta-carotene-forming phytoene desaturase (517 aa).

Residue 11–44 (VVVGAGVGGLAAAARLAHQGFDVQVFEKTQGPGG) coordinates FAD.

This sequence belongs to the carotenoid/retinoid oxidoreductase family. FAD serves as cofactor.

It carries out the reaction 15-cis-phytoene + 2 A = all-trans-zeta-carotene + 2 AH2. Its pathway is carotenoid biosynthesis; lycopene biosynthesis. Dehydrogenates carotenes in the cis conformation: has cis-to-trans isomerase activity and mediates dehydrogenation of cis-phytoene, producing zeta-carotene via the intermediary of phytofluene by the symmetrical introduction of 2 double bonds at the C-11 and C-11' positions of phytoene. This Myxococcus xanthus protein is zeta-carotene-forming phytoene desaturase (carA2).